The primary structure comprises 529 residues: Bifunctional purine biosynthesis protein PurH (529 aa).

One can recognise an MGS-like domain in the interval 2–148; it reads QHLRPIRRAL…KNHKDVTIVV (147 aa).

It belongs to the PurH family.

It carries out the reaction (6R)-10-formyltetrahydrofolate + 5-amino-1-(5-phospho-beta-D-ribosyl)imidazole-4-carboxamide = 5-formamido-1-(5-phospho-D-ribosyl)imidazole-4-carboxamide + (6S)-5,6,7,8-tetrahydrofolate. The catalysed reaction is IMP + H2O = 5-formamido-1-(5-phospho-D-ribosyl)imidazole-4-carboxamide. It functions in the pathway purine metabolism; IMP biosynthesis via de novo pathway; 5-formamido-1-(5-phospho-D-ribosyl)imidazole-4-carboxamide from 5-amino-1-(5-phospho-D-ribosyl)imidazole-4-carboxamide (10-formyl THF route): step 1/1. It participates in purine metabolism; IMP biosynthesis via de novo pathway; IMP from 5-formamido-1-(5-phospho-D-ribosyl)imidazole-4-carboxamide: step 1/1. The polypeptide is Bifunctional purine biosynthesis protein PurH (Proteus mirabilis (strain HI4320)).